Here is a 280-residue protein sequence, read N- to C-terminus: 3-dehydroshikimate dehydratase (280 aa).

Positions 70, 102, and 142 each coordinate substrate. E142 lines the Mn(2+) pocket. H144 (proton acceptor) is an active-site residue. Substrate-binding residues include D172 and H175. Residue D172 participates in Mn(2+) binding. H198 contributes to the Mn(2+) binding site. Residues Y217 and E253 each contribute to the substrate site. E253 lines the Mn(2+) pocket.

As to quaternary structure, homodimer. Mn(2+) is required as a cofactor.

It catalyses the reaction 3-dehydroshikimate = 3,4-dihydroxybenzoate + H2O. It functions in the pathway aromatic compound metabolism; 3,4-dihydroxybenzoate biosynthesis; 3,4-dihydroxybenzoate from 3-dehydroquinate: step 2/2. The protein operates within siderophore biosynthesis; petrobactin biosynthesis. Its function is as follows. Involved in the biosynthesis of petrobactin, a catecholate siderophore that functions in both iron acquisition and virulence. Catalyzes the conversion of 3-dehydroshikimate to 3,4-dihydroxybenzoate (3,4-DHBA). In Bacillus anthracis, this protein is 3-dehydroshikimate dehydratase.